Reading from the N-terminus, the 459-residue chain is RuvB-like helicase 1 (459 aa).

75-82 contacts ATP; sequence GGPSTGKT.

The protein belongs to the RuvB family. In terms of assembly, may form heterododecamers with RVB2. Component of the SWR1 chromatin remodeling complex, the INO80 chromatin remodeling complex, and of the R2TP complex.

It localises to the nucleus. It catalyses the reaction ATP + H2O = ADP + phosphate + H(+). DNA helicase which participates in several chromatin remodeling complexes, including the SWR1 and the INO80 complexes. The SWR1 complex mediates the ATP-dependent exchange of histone H2A for the H2A variant HZT1 leading to transcriptional regulation of selected genes by chromatin remodeling. The INO80 complex remodels chromatin by shifting nucleosomes and is involved in DNA repair. Also involved in pre-rRNA processing. This is RuvB-like helicase 1 (RVB1) from Eremothecium gossypii (strain ATCC 10895 / CBS 109.51 / FGSC 9923 / NRRL Y-1056) (Yeast).